Here is a 389-residue protein sequence, read N- to C-terminus: Oxysterol-binding protein 1 (389 aa).

Coiled coils occupy residues 1-31 (MGKK…NKPA) and 340-371 (KDDV…DEWK). Residues 1–43 (MGKKDKNVSVEEEVDEAEIEKLAAENANKPAPQLTKEDLDAMD) are disordered.

It belongs to the OSBP family. Interacts with dstC.

Its subcellular location is the cytoplasm. Its function is as follows. May play a role in the regulation of the slug-fruiting body switch. The polypeptide is Oxysterol-binding protein 1 (osbA) (Dictyostelium discoideum (Social amoeba)).